Here is a 429-residue protein sequence, read N- to C-terminus: MATQQRPFHLVVFGASGFTGQFVTEEVAREQVSPERTSHLPWAVAGRSREKLLRVLERAAMKLGRPTLSSEVGIIICDITNPASLDEMAKQATVVLNCVGPYRFYGEPVIKACIENGTSCIDISGEPQFLELMYWKYHEKAAEKGVYIIGSSGFDSIPADLGVIYTRNKMNGTLTAVESFLTISSGPEGLCVHDGTWKSAVYGFGDKSNLKKLRNESDMKPVPIVGPKLKRRWPISYCRELNSYSIPFLGADVSVVKRTQRYLHENLEQSPVQYAAYINVGGITSVIKLMFAGLFFLFFVRFGIGRQLLIKFTWLFSFGYFSKQGPTQKQIDASSFTMTFFGQGFSQGVSPVKNKPNIRICTQVKGPEAGYVSTSIAMVQAAMILLNDASDLPKAGGVFTPGAAFSRTKLIDRLNEHGIEFSVISSTEV.

Position 2 is an N-acetylalanine (A2). S217 is modified (phosphoserine).

This sequence belongs to the saccharopine dehydrogenase family.

This chain is Saccharopine dehydrogenase-like oxidoreductase (SCCPDH), found in Bos taurus (Bovine).